A 492-amino-acid chain; its full sequence is Ferruginol synthase (492 aa).

A helical membrane pass occupies residues 1–21 (MDPFPLVAAALFIAATWFITF). A heme-binding site is contributed by Cys-436.

Belongs to the cytochrome P450 family. Heme is required as a cofactor. Expressed in leaf glandular trichomes.

Its subcellular location is the membrane. It carries out the reaction abieta-8,11,13-triene + reduced [NADPH--hemoprotein reductase] + O2 = ferruginol + oxidized [NADPH--hemoprotein reductase] + H2O + H(+). The catalysed reaction is ferruginol + reduced [NADPH--hemoprotein reductase] + O2 = 11-hydroxyferruginol + oxidized [NADPH--hemoprotein reductase] + H2O + H(+). The enzyme catalyses miltiradiene + 2 reduced [NADPH--hemoprotein reductase] + 2 O2 = 11-oxomiltiradiene + 2 oxidized [NADPH--hemoprotein reductase] + 3 H2O + 2 H(+). The protein operates within secondary metabolite biosynthesis; terpenoid biosynthesis. Monooxygenase involved in the biosynthesis of labdane-related diterpenes natural products. Catalyzes the oxidation of abietatriene to produce ferruginol. Catalyzes the oxidation of ferruginol at C-12 to produce 11-hydroxyferruginol. Ferruginol and 11-hydroxyferruginol are intermediates in the biosynthesis of carnosate, a potent antioxidant. May also convert miltiradiene into 11-oxomiltiradiene. In Salvia fruticosa (Greek sage), this protein is Ferruginol synthase.